The sequence spans 241 residues: Host range factor p28 (241 aa).

The KilA-N domain maps to 21 to 131 (YIDEPNDIRL…QSILRGLVNW (111 aa)). The RING-type zinc-finger motif lies at 172–225 (CGICYEVVYSKRLENDRYFGLLDSCNHIFCITCINIWHRTRRETGASDNCPICR).

It belongs to the orthopoxvirus OPG021 family.

It localises to the host cytoplasm. It catalyses the reaction S-ubiquitinyl-[E2 ubiquitin-conjugating enzyme]-L-cysteine + [acceptor protein]-L-lysine = [E2 ubiquitin-conjugating enzyme]-L-cysteine + N(6)-ubiquitinyl-[acceptor protein]-L-lysine.. In terms of biological role, RING-finger E3 ubiquitin ligase which catalyzes the formation of both 'Lys-48'- and 'Lys-63'-linked polyubiquitin chains. Plays an important role in virulence by acting as an anti-apoptotic factor. This is Host range factor p28 (OPG021) from Ectromelia virus (strain Moscow) (ECTV).